The primary structure comprises 655 residues: Probable potassium transport system protein Kup (655 aa).

12 helical membrane passes run 19 to 39 (GLLI…LYVM), 42 to 62 (IAGG…CVFW), 102 to 122 (VWPA…TPPI), 132 to 152 (LIFN…VMLF), 161 to 181 (IVGK…ATLG), 214 to 234 (SGFW…ALYS), 246 to 266 (ISWI…GAWI), 282 to 302 (IMPE…AIIA), 338 to 358 (LFIP…VLWF), 370 to 390 (LAIN…LLII), 395 to 415 (FIWV…FLVA), and 420 to 440 (FFHG…IMII).

It belongs to the HAK/KUP transporter (TC 2.A.72) family.

The protein resides in the cell inner membrane. It carries out the reaction K(+)(in) + H(+)(in) = K(+)(out) + H(+)(out). In terms of biological role, transport of potassium into the cell. Likely operates as a K(+):H(+) symporter. The protein is Probable potassium transport system protein Kup of Cytophaga hutchinsonii (strain ATCC 33406 / DSM 1761 / CIP 103989 / NBRC 15051 / NCIMB 9469 / D465).